The primary structure comprises 413 residues: Serine hydroxymethyltransferase (413 aa).

Residues Leu-117 and 121 to 123 (GHL) contribute to the (6S)-5,6,7,8-tetrahydrofolate site. Lys-226 is modified (N6-(pyridoxal phosphate)lysine). 349 to 351 (SPF) provides a ligand contact to (6S)-5,6,7,8-tetrahydrofolate.

The protein belongs to the SHMT family. In terms of assembly, homodimer. Requires pyridoxal 5'-phosphate as cofactor.

The protein localises to the cytoplasm. It carries out the reaction (6R)-5,10-methylene-5,6,7,8-tetrahydrofolate + glycine + H2O = (6S)-5,6,7,8-tetrahydrofolate + L-serine. The protein operates within one-carbon metabolism; tetrahydrofolate interconversion. Its pathway is amino-acid biosynthesis; glycine biosynthesis; glycine from L-serine: step 1/1. In terms of biological role, catalyzes the reversible interconversion of serine and glycine with tetrahydrofolate (THF) serving as the one-carbon carrier. This reaction serves as the major source of one-carbon groups required for the biosynthesis of purines, thymidylate, methionine, and other important biomolecules. Also exhibits THF-independent aldolase activity toward beta-hydroxyamino acids, producing glycine and aldehydes, via a retro-aldol mechanism. The chain is Serine hydroxymethyltransferase from Listeria monocytogenes serovar 1/2a (strain ATCC BAA-679 / EGD-e).